The following is a 114-amino-acid chain: UPF0212 protein UNCMA_00570 (114 aa).

The protein belongs to the UPF0212 family.

The sequence is that of UPF0212 protein UNCMA_00570 from Methanocella arvoryzae (strain DSM 22066 / NBRC 105507 / MRE50).